The sequence spans 451 residues: MIDSEALESERVKLKRDIADLRANLNRKEQCLRELEAAIAAGEDSDEAEESSNDMPTPQTKLTNDDIARYSRQLILQDFGVQGQLKLKNSSVLIVGMGGLGCPAAQYLVAAGCGHLGLIDYDEVERSNLHRQILHSEHRCGMSKAESARIALLELNSHCQIRCHSRLINSMNAMHIIRPYDVVLDCSDNVATRYLLNDACVMLRKPLVSGSALKMDGQLTVYGYGQGPCYRCIYPVPPPPEAVTNCGDGGVLGAVTGIIGAMQALEAIKVIIGLGDVMSGRLLIFDGSSFMFRNIRIRTKRPNCHVCSAQPLITELIDYEMFCGMHATDKDNPLDLLEPDQRLEVKEYHQKLQSQPHLLLDVRPPAEFEICQLPRSINVPLSEILDDSYLKRFAKQLEDKELPIVLLCRRGNDSQIAAQHIKNRFPAHSIRDLVGGLHAWTGSVDATFPIY.

The disordered stretch occupies residues 42-62 (GEDSDEAEESSNDMPTPQTKL). Over residues 43–52 (EDSDEAEESS) the composition is skewed to acidic residues. T60 is subject to Phosphothreonine. Residues G99, D120, 127–131 (SNLHR), K144, and 188–189 (DN) contribute to the ATP site. Residues C229 and C232 each coordinate Zn(2+). The active-site Glycyl thioester intermediate; for adenylyltransferase activity is the C246. Zn(2+) contacts are provided by C304 and C307. The 97-residue stretch at 353–449 (QSQPHLLLDV…WTGSVDATFP (97 aa)) folds into the Rhodanese domain. The active-site Cysteine persulfide intermediate; for sulfurtransferase activity is the C408.

In the N-terminal section; belongs to the HesA/MoeB/ThiF family. UBA4 subfamily. The cofactor is Zn(2+).

It is found in the cytoplasm. It localises to the cytosol. The enzyme catalyses [molybdopterin-synthase sulfur-carrier protein]-C-terminal Gly-Gly + ATP + H(+) = [molybdopterin-synthase sulfur-carrier protein]-C-terminal Gly-Gly-AMP + diphosphate. It catalyses the reaction [molybdopterin-synthase sulfur-carrier protein]-C-terminal Gly-Gly-AMP + S-sulfanyl-L-cysteinyl-[cysteine desulfurase] + AH2 = [molybdopterin-synthase sulfur-carrier protein]-C-terminal-Gly-aminoethanethioate + L-cysteinyl-[cysteine desulfurase] + A + AMP + 2 H(+). Its pathway is tRNA modification; 5-methoxycarbonylmethyl-2-thiouridine-tRNA biosynthesis. It functions in the pathway cofactor biosynthesis; molybdopterin biosynthesis. Its function is as follows. Plays a central role in 2-thiolation of mcm(5)S(2)U at tRNA wobble positions of cytosolic tRNA(Lys), tRNA(Glu) and tRNA(Gln). Also essential during biosynthesis of the molybdenum cofactor. Acts by mediating the C-terminal thiocarboxylation of sulfur carriers URM1 and MOCS2A. Its N-terminus first activates URM1 and MOCS2A as acyl-adenylates (-COAMP), then the persulfide sulfur on the catalytic cysteine is transferred to URM1 and MOCS2A to form thiocarboxylation (-COSH) of their C-terminus. The reaction probably involves hydrogen sulfide that is generated from the persulfide intermediate and that acts as a nucleophile towards URM1 and MOCS2A. Subsequently, a transient disulfide bond is formed. Does not use thiosulfate as sulfur donor; NFS1 probably acting as a sulfur donor for thiocarboxylation reactions. In Drosophila persimilis (Fruit fly), this protein is Adenylyltransferase and sulfurtransferase MOCS3.